We begin with the raw amino-acid sequence, 314 residues long: Putative S-adenosyl-L-methionine-dependent methyltransferase MAB_3886c (314 aa).

Residues Asp-133 and 162-163 (DL) each bind S-adenosyl-L-methionine.

It belongs to the UPF0677 family.

Exhibits S-adenosyl-L-methionine-dependent methyltransferase activity. The sequence is that of Putative S-adenosyl-L-methionine-dependent methyltransferase MAB_3886c from Mycobacteroides abscessus (strain ATCC 19977 / DSM 44196 / CCUG 20993 / CIP 104536 / JCM 13569 / NCTC 13031 / TMC 1543 / L948) (Mycobacterium abscessus).